The following is a 203-amino-acid chain: Cell division protein SepF (203 aa).

Disordered regions lie at residues 26-51 (DGEL…RRGQ) and 167-203 (GTAS…WRNQ). 2 stretches are compositionally biased toward basic and acidic residues: residues 39 to 50 (EPPRRSAPERRG) and 183 to 203 (RRSE…WRNQ).

It belongs to the SepF family. In terms of assembly, homodimer. Interacts with FtsZ.

The protein resides in the cytoplasm. Its function is as follows. Cell division protein that is part of the divisome complex and is recruited early to the Z-ring. Probably stimulates Z-ring formation, perhaps through the cross-linking of FtsZ protofilaments. Its function overlaps with FtsA. The sequence is that of Cell division protein SepF from Symbiobacterium thermophilum (strain DSM 24528 / JCM 14929 / IAM 14863 / T).